The primary structure comprises 73 residues: Protein SlyX homolog (73 aa).

It belongs to the SlyX family.

The sequence is that of Protein SlyX homolog from Histophilus somni (strain 129Pt) (Haemophilus somnus).